The following is a 156-amino-acid chain: Small ribosomal subunit protein uS7 (156 aa).

This sequence belongs to the universal ribosomal protein uS7 family. As to quaternary structure, part of the 30S ribosomal subunit. Contacts proteins S9 and S11.

Its function is as follows. One of the primary rRNA binding proteins, it binds directly to 16S rRNA where it nucleates assembly of the head domain of the 30S subunit. Is located at the subunit interface close to the decoding center, probably blocks exit of the E-site tRNA. The chain is Small ribosomal subunit protein uS7 from Rubrobacter xylanophilus (strain DSM 9941 / JCM 11954 / NBRC 16129 / PRD-1).